The chain runs to 426 residues: Glutamyl-tRNA reductase (426 aa).

Substrate is bound by residues 52–55 (TCNR), Ser110, 115–117 (EYE), and Gln121. Cys53 functions as the Nucleophile in the catalytic mechanism. 190–195 (GAGEMA) provides a ligand contact to NADP(+).

It belongs to the glutamyl-tRNA reductase family. As to quaternary structure, homodimer.

The enzyme catalyses (S)-4-amino-5-oxopentanoate + tRNA(Glu) + NADP(+) = L-glutamyl-tRNA(Glu) + NADPH + H(+). Its pathway is porphyrin-containing compound metabolism; protoporphyrin-IX biosynthesis; 5-aminolevulinate from L-glutamyl-tRNA(Glu): step 1/2. Functionally, catalyzes the NADPH-dependent reduction of glutamyl-tRNA(Glu) to glutamate 1-semialdehyde (GSA). The sequence is that of Glutamyl-tRNA reductase from Saccharolobus solfataricus (strain ATCC 35092 / DSM 1617 / JCM 11322 / P2) (Sulfolobus solfataricus).